Reading from the N-terminus, the 760-residue chain is ATP-dependent zinc metalloprotease FtsH (760 aa).

The Cytoplasmic portion of the chain corresponds to Met1–Asn5. Residues Val6 to Phe26 form a helical membrane-spanning segment. Residues Ser27–Ser110 are Extracellular-facing. A helical transmembrane segment spans residues Ile111–Met131. The Cytoplasmic portion of the chain corresponds to Phe132 to Gly760. Gly203–Thr210 provides a ligand contact to ATP. His425 provides a ligand contact to Zn(2+). Residue Glu426 is part of the active site. The Zn(2+) site is built by His429 and Asp501. Positions Asp616–Gly760 are disordered. Low complexity predominate over residues Ala650–Ala669. Residues Gly740 to Asp750 show a composition bias toward acidic residues.

The protein in the central section; belongs to the AAA ATPase family. This sequence in the C-terminal section; belongs to the peptidase M41 family. In terms of assembly, homohexamer. Zn(2+) is required as a cofactor.

It localises to the cell membrane. Its function is as follows. Acts as a processive, ATP-dependent zinc metallopeptidase for both cytoplasmic and membrane proteins. Plays a role in the quality control of integral membrane proteins. The polypeptide is ATP-dependent zinc metalloprotease FtsH (Mycobacterium tuberculosis (strain CDC 1551 / Oshkosh)).